Here is a 188-residue protein sequence, read N- to C-terminus: Large ribosomal subunit protein eL18 (188 aa).

The tract at residues 153-188 (GKAPGTPHSHTKPYVRSKGRKFERARGRRASCGYKN) is disordered. Positions 161–171 (SHTKPYVRSKG) are enriched in basic residues.

It belongs to the eukaryotic ribosomal protein eL18 family. Component of the large ribosomal subunit.

The protein localises to the cytoplasm. It localises to the cytosol. Its subcellular location is the rough endoplasmic reticulum. Functionally, component of the large ribosomal subunit. The ribosome is a large ribonucleoprotein complex responsible for the synthesis of proteins in the cell. The chain is Large ribosomal subunit protein eL18 (rpl18) from Oreochromis mossambicus (Mozambique tilapia).